Here is a 252-residue protein sequence, read N- to C-terminus: Body wall muscle protein HR-29 (252 aa).

N-acetylserine is present on Ser2. 3 tandem repeats follow at residues 37–55 (RDWMTTPYSSTGIGRRDLS), 56–74 (QDWMTTPYTPAGVGRRDLS), and 75–93 (QDWMTTPYTSKGIGSRNLS). Residues 37-93 (RDWMTTPYSSTGIGRRDLSQDWMTTPYTPAGVGRRDLSQDWMTTPYTSKGIGSRNLS) are 3 X 19 AA approximate tandem repeats. Positions 138 to 249 (ISVEHEGKTT…KKTAVPVTVE (112 aa)) constitute a sHSP domain.

This sequence belongs to the small heat shock protein (HSP20) family. In terms of assembly, exists as an oligomer.

The protein localises to the membrane. Its function is as follows. May be a component of myofibrils where it acts as a stabilizer. The protein is Body wall muscle protein HR-29 of Halocynthia roretzi (Sea squirt).